A 205-amino-acid polypeptide reads, in one-letter code: Holliday junction branch migration complex subunit RuvA (205 aa).

The tract at residues 1–64 (MIGKLKGSIE…EDQLKLFGFV (64 aa)) is domain I. The domain II stretch occupies residues 65–143 (SALEREWFNL…AFAGDASASI (79 aa)). The interval 144–153 (GLKQELGEGV) is flexible linker. The tract at residues 153–205 (VASAPVADAVSALTNLGYSRDQAANAVAAALKNGGEGGDSAKLIRLGLKELSR) is domain III.

Belongs to the RuvA family. In terms of assembly, homotetramer. Forms an RuvA(8)-RuvB(12)-Holliday junction (HJ) complex. HJ DNA is sandwiched between 2 RuvA tetramers; dsDNA enters through RuvA and exits via RuvB. An RuvB hexamer assembles on each DNA strand where it exits the tetramer. Each RuvB hexamer is contacted by two RuvA subunits (via domain III) on 2 adjacent RuvB subunits; this complex drives branch migration. In the full resolvosome a probable DNA-RuvA(4)-RuvB(12)-RuvC(2) complex forms which resolves the HJ.

It is found in the cytoplasm. Functionally, the RuvA-RuvB-RuvC complex processes Holliday junction (HJ) DNA during genetic recombination and DNA repair, while the RuvA-RuvB complex plays an important role in the rescue of blocked DNA replication forks via replication fork reversal (RFR). RuvA specifically binds to HJ cruciform DNA, conferring on it an open structure. The RuvB hexamer acts as an ATP-dependent pump, pulling dsDNA into and through the RuvAB complex. HJ branch migration allows RuvC to scan DNA until it finds its consensus sequence, where it cleaves and resolves the cruciform DNA. The protein is Holliday junction branch migration complex subunit RuvA of Agrobacterium fabrum (strain C58 / ATCC 33970) (Agrobacterium tumefaciens (strain C58)).